The primary structure comprises 430 residues: uncharacterized protein (430 aa).

A run of 2 helical transmembrane segments spans residues 20–40 (YLCLVFLAVYYAYPLLFGIMP) and 405–425 (YIWWALHISVCVLTILRLLVI).

It localises to the membrane. This is an uncharacterized protein from Schizosaccharomyces pombe (strain 972 / ATCC 24843) (Fission yeast).